We begin with the raw amino-acid sequence, 415 residues long: Histidine--tRNA ligase (415 aa).

This sequence belongs to the class-II aminoacyl-tRNA synthetase family. In terms of assembly, homodimer.

Its subcellular location is the cytoplasm. It catalyses the reaction tRNA(His) + L-histidine + ATP = L-histidyl-tRNA(His) + AMP + diphosphate + H(+). In Clostridium perfringens (strain ATCC 13124 / DSM 756 / JCM 1290 / NCIMB 6125 / NCTC 8237 / Type A), this protein is Histidine--tRNA ligase.